The sequence spans 388 residues: Na(+)/H(+) antiporter NhaA (388 aa).

11 helical membrane passes run 8–28 (FFSA…LGLL), 57–77 (LAEF…IAEI), 93–113 (ILPL…YGLI), 123–143 (GWAI…LALG), 152–172 (VWLM…IALF), 175–195 (SHLN…MIGL), 210–230 (GVVL…AGVI), 254–274 (IIAP…SMGM), 278–298 (AMSF…GLFL), 328–348 (LFGL…IAEL), and 361–381 (YGIL…LRFL).

This sequence belongs to the NhaA Na(+)/H(+) (TC 2.A.33) antiporter family.

It is found in the cell inner membrane. The enzyme catalyses Na(+)(in) + 2 H(+)(out) = Na(+)(out) + 2 H(+)(in). Functionally, na(+)/H(+) antiporter that extrudes sodium in exchange for external protons. In Zymomonas mobilis subsp. mobilis (strain ATCC 31821 / ZM4 / CP4), this protein is Na(+)/H(+) antiporter NhaA.